Consider the following 35-residue polypeptide: Alpha-amanitin proprotein 2 (35 aa).

Positions 1-10 (MFDTNSTRLP) are excised as a propeptide. Isoleucine 11 is modified ((3R,4R)-4,5-dihydroxyisoleucine; in form alpha-amanitin). Isoleucine 11 carries the (3R,4S)-4-hydroxyisoleucine; in form gamma-amanitin modification. Positions 11–18 (IWGIGCNP) form a cross-link, cyclopeptide (Ile-Pro). The segment at residues 12 to 16 (WGIGC) is a cross-link (2'-cysteinyl-6'-hydroxytryptophan sulfoxide (Trp-Cys)). Proline 18 bears the 4-hydroxyproline mark. Positions 19 to 35 (WTAEHVDQTLVSGNDIC) are excised as a propeptide.

It belongs to the MSDIN fungal toxin family. In terms of processing, processed by the macrocyclase-peptidase enzyme POPB to yield a toxic bicyclic octapeptide. POPB first removes 10 residues from the N-terminus. Conformational trapping of the remaining peptide forces the enzyme to release this intermediate rather than proceed to macrocyclization. The enzyme rebinds the remaining peptide in a different conformation and catalyzes macrocyclization of the N-terminal 8 residues.

Functionally, major toxin belonging to the bicyclic octapeptides amatoxins that acts by binding non-competitively to RNA polymerase II and greatly slowing the elongation of transcripts from target promoters. This Galerina marginata (strain CBS 339.88) protein is Alpha-amanitin proprotein 2.